Reading from the N-terminus, the 363-residue chain is Endopolygalacturonase 1 (363 aa).

The signal sequence occupies residues 1 to 17 (MVSYLFVLGALASVAIA). A propeptide spanning residues 18 to 26 (SPVPELKAR) is cleaved from the precursor. Cysteines 29 and 44 form a disulfide. 4 PbH1 repeats span residues 188-209 (STGV…AVNS), 210-230 (GTNI…SIGS), 239-260 (VKSV…RIKT), and 268-290 (VSDI…VIEQ). Residue D202 is the Proton donor of the active site. An intrachain disulfide couples C204 to C220. Residue N212 is glycosylated (N-linked (GlcNAc...) asparagine). The active site involves H224. 2 disulfides stabilise this stretch: C330–C333 and C352–C363.

Belongs to the glycosyl hydrolase 28 family.

It localises to the secreted. The enzyme catalyses (1,4-alpha-D-galacturonosyl)n+m + H2O = (1,4-alpha-D-galacturonosyl)n + (1,4-alpha-D-galacturonosyl)m.. Involved in maceration and soft-rotting of plant tissue. Hydrolyzes the 1,4-alpha glycosidic bonds of de-esterified pectate in the smooth region of the plant cell wall. The protein is Endopolygalacturonase 1 (PG1) of Colletotrichum lindemuthianum (Bean anthracnose fungus).